A 536-amino-acid polypeptide reads, in one-letter code: ATP synthase subunit beta (536 aa).

The segment at 1–57 (MVKAVSSSKGAAKVEQKKSAARSGVKKNASKSQASLQDTSSPLKTSSKNAHAKKDVQ) is disordered. Residues 30-49 (SKSQASLQDTSSPLKTSSKN) show a composition bias toward polar residues. 208-215 (GGAGVGKT) contributes to the ATP binding site.

This sequence belongs to the ATPase alpha/beta chains family. F-type ATPases have 2 components, CF(1) - the catalytic core - and CF(0) - the membrane proton channel. CF(1) has five subunits: alpha(3), beta(3), gamma(1), delta(1), epsilon(1). CF(0) has three main subunits: a(1), b(2) and c(9-12). The alpha and beta chains form an alternating ring which encloses part of the gamma chain. CF(1) is attached to CF(0) by a central stalk formed by the gamma and epsilon chains, while a peripheral stalk is formed by the delta and b chains.

It is found in the cell inner membrane. The enzyme catalyses ATP + H2O + 4 H(+)(in) = ADP + phosphate + 5 H(+)(out). Produces ATP from ADP in the presence of a proton gradient across the membrane. The catalytic sites are hosted primarily by the beta subunits. The polypeptide is ATP synthase subunit beta (Bartonella quintana (strain Toulouse) (Rochalimaea quintana)).